We begin with the raw amino-acid sequence, 200 residues long: MAKFTQHTGIVVPLDAANVDTDAIIPKQFLQKVTRTGFGQHLFNDWRFLDNAGQQPNPDFVLNQPRYRGASILLARENFGCGSSREHAPWALTDYGFHAVIAPSFADIFYGNSFNNQLLPITLSEEQINELFAMVAAQEGMTFTVDLERQQVVAGDKVYPFEIDSFRRHYMINGLDSIGLTLMHDEAISQYESRQPAFLN.

This sequence belongs to the LeuD family. LeuD type 1 subfamily. As to quaternary structure, heterodimer of LeuC and LeuD.

It catalyses the reaction (2R,3S)-3-isopropylmalate = (2S)-2-isopropylmalate. Its pathway is amino-acid biosynthesis; L-leucine biosynthesis; L-leucine from 3-methyl-2-oxobutanoate: step 2/4. Its function is as follows. Catalyzes the isomerization between 2-isopropylmalate and 3-isopropylmalate, via the formation of 2-isopropylmaleate. The protein is 3-isopropylmalate dehydratase small subunit of Sodalis glossinidius (strain morsitans).